Reading from the N-terminus, the 186-residue chain is MSEPASISSGIAARYAAAVFELAKDEGALPALEKDMDALGAAWSESADLRDLATSPVYAREEQQKAIAAVAAKMGLSTVTANTLALMGSKRRLFVLPQMVADVQNRIATEKGEITAEVTAAAPLSPEQAARLAATLKARAGKDVKLKTTVDESLIGGLVVKLGSSMIDTSVKARLAALQNAMKEVG.

This sequence belongs to the ATPase delta chain family. As to quaternary structure, F-type ATPases have 2 components, F(1) - the catalytic core - and F(0) - the membrane proton channel. F(1) has five subunits: alpha(3), beta(3), gamma(1), delta(1), epsilon(1). CF(0) has four main subunits: a(1), b(1), b'(1) and c(10-14). The alpha and beta chains form an alternating ring which encloses part of the gamma chain. F(1) is attached to F(0) by a central stalk formed by the gamma and epsilon chains, while a peripheral stalk is formed by the delta, b and b' chains.

The protein resides in the cell inner membrane. F(1)F(0) ATP synthase produces ATP from ADP in the presence of a proton or sodium gradient. F-type ATPases consist of two structural domains, F(1) containing the extramembraneous catalytic core and F(0) containing the membrane proton channel, linked together by a central stalk and a peripheral stalk. During catalysis, ATP synthesis in the catalytic domain of F(1) is coupled via a rotary mechanism of the central stalk subunits to proton translocation. Its function is as follows. This protein is part of the stalk that links CF(0) to CF(1). It either transmits conformational changes from CF(0) to CF(1) or is implicated in proton conduction. The protein is ATP synthase subunit delta of Cereibacter sphaeroides (strain ATCC 17029 / ATH 2.4.9) (Rhodobacter sphaeroides).